Consider the following 722-residue polypeptide: Tegument protein UL46 (722 aa).

The tract at residues 423–534 is disordered; it reads RLAASGPPGG…AAAARPLAAQ (112 aa). 2 stretches are compositionally biased toward basic and acidic residues: residues 440–451 and 474–491; these read CRDKIQRTRRDN and HRED…DRGP. Residues 510–522 show a composition bias toward pro residues; the sequence is PRLPPRNPAPPEQ. A compositionally biased stretch (low complexity) spans 523–534; it reads RPAAAARPLAAQ.

The protein belongs to the herpesviridae HHV-1 VP11/12 protein family. In terms of assembly, interacts with VP16. Interacts with host LCK, PIK3R1, SHC1 AND GRB2; these interactions promote the activation of the PI3K/AKT pathway. Interacts with host YWHAB. Interacts with ICP0; this interaction targets UL46 for degradation by the proteasome. Post-translationally, phosphorylated by host LCK. The phosphorylation seems to be lymphocyte-specific.

It is found in the virion tegument. Its subcellular location is the host cell membrane. In terms of biological role, plays a role in the activation of the host PI3K/AKT pathway to promote cell survival. Interacts with and activates host LCK and thereby recruits downstream partners SHC1, GRB2 and PI3KR1 in order to activate the PI3K pathway by phosphorylating host AKT on its activating residues. This mechanism is inhibited by the viral protein US3 that instead promotes incorporation of UL46 into virions. This is Tegument protein UL46 from Homo sapiens (Human).